The following is a 1449-amino-acid chain: MKKLFVVLVVMPLIYGDNFPCSKLTNRTIGNHWNLIETFLLNYSSRLSPNSDVVLGDYFPTVQPWFNCIHNNSNDLYVTLENLKALYWDYATENSTWNHKQRLNVVVNGYPYSITVTTTRNFNSAEGAIICICKGSPPTTTTESSLTCNWGSECRLNHKFPICPSNSEANCGNMLYGLQWFADAVVAYLHGASYRISFENQWSGTVTLGDMRATTLETAGTLVDLWWFNPVYDVSYYRVNNKNGTTVVSNCTDQCASYVANVFTTQPGGFIPSDFSFNNWFLLTNSSTLVSGKLVTKQPLLVNCLWPVPSFEEAASTFCFEGAGFDQCNGAVLNNTVDVIRFNLNFTTNVQSGKGATVFSLNTTGGVTLEISCYNDTVSDSSFSSYGEIPFGVTDGPRYCYVLYNGTALKYLGTLPPSVKEIAISKWGHFYINGYNFFSTFPIDCISFNLTTGDSDVFWTIAYTSYTEALVQVENTAITKVTYCNSYVNNIKCSQLTANLNNGFYPVSSSEVGFVNKSVVLLPTFYTHTIVNITIGLGMKRSGYGQPIASTLSNITLPMQDNNIDVYCIRSDQFSVYVHSTCKSALWDNVFKRNCTDVLDATAVIKTGTCPFSFDKLNNYLTFNKFCLSLSPVGANCKFDVAARTRANDQVVRSLYVIYEEGDNIVGVPSDNSGLHDLSVLHLDSCTDYNIYGRSGVGIIRQTNRTLLSGLYYTSLSGDLLGFKNVSDGVIYSVTPCDVSAQAAVIDGTIVGAITSINSELLGLTHWTTTPNFYYYSIYNYTNDMTRGTAIDSNDVDCEPVITYSNIGVCKNGALVFINVTHSDGDVQPISTGNVTIPTNFTISVQVEYIQVYTTPVSIDCSRYVCNGNPRCNKLLTQYVSACQTIEQALAVGARLENMEVDSMLFVSENALKLASVEAFNSSETLDPIYKEWPNIGGSWLEGLKYILPSDNSKRKYRSAIEDLLFSKVVTSGLGTVDEDYKRCTGGYDIADLVCAQYYNGIMVLPGVANADKMTMYTASLAGGITLGALGGGAVAIPFAVAVQARLNYVALQTDVLNKNQQILASAFNQAIGNITQSFGKVNDAIHQTSRGLATVAKALAKVQDVVNTQGQALSHLTVQLQNNFQAISSSISDIYNRLDELSADAHVDRLITGRLTALNAFVSQTLTRQAEVRASRQLAKDKVNECVRSQSQRFGFCGNGTHLFSLANAAPNGMIFFHAVLLPTAYETVTAWAGICALDGDRTFGLVVKDVQLTLFRNLDDKFYLTPRTMYQPRVATSSDFVQIEGCDVLFVNATLSDLPSIIPDYIDINQTVQDILENFRPNWTVPELTFDIFNATYLNLTGEIDDLEFRSEKLHNTTVELAILIDNINNTLVNLEWLNRIETYVKWPWYVWLLIGLVVIFCIPLLLFCCCSTGCCGCIGCLGSCCHSICSRRQFENYEPIEKVHIH.

A signal peptide spans 1–28; sequence MKKLFVVLVVMPLIYGDNFPCSKLTNRT. S1 stretches follow at residues 17 to 776 and 29 to 776; these read DNFP…FYYY and IGNH…FYYY. Residues 29–1390 are Virion surface-facing; it reads IGNHWNLIET…NRIETYVKWP (1362 aa). The interval 657–801 is interaction with host ANPEP; sequence VIYEEGDNIV…DSNDVDCEPV (145 aa). The tract at residues 777-1449 is S2; it reads SIYNYTNDMT…YEPIEKVHIH (673 aa). The segment at 1022 to 1043 is fusion peptide; that stretch reads AGGITLGALGGGAVAIPFAVAV. Positions 1037–1156 are heptad repeat 1 (HR1); sequence IPFAVAVQAR…HVDRLITGRL (120 aa). 2 coiled-coil regions span residues 1104–1148 and 1338–1380; these read QDVV…DAHV and TYLN…LEWL. Positions 1305-1402 are heptad repeat 2 (HR2); it reads PDYIDINQTV…VWLLIGLVVI (98 aa). A helical membrane pass occupies residues 1391-1410; it reads WYVWLLIGLVVIFCIPLLLF. Residues 1411–1449 are Intravirion-facing; that stretch reads CCCSTGCCGCIGCLGSCCHSICSRRQFENYEPIEKVHIH. The KxHxx signature appears at 1445-1449; the sequence is KVHIH.

It belongs to the alphacoronaviruses spike protein family. In terms of assembly, homotrimer. During virus morphogenesis, found in a complex with M and HE proteins. Interacts with host ANPEP.

The protein resides in the virion membrane. It is found in the host endoplasmic reticulum-Golgi intermediate compartment membrane. In terms of biological role, S1 region attaches the virion to the cell membrane by interacting with host ANPEP/aminopeptidase N, initiating the infection. Binding to the receptor probably induces conformational changes in the S glycoprotein unmasking the fusion peptide of S2 region and activating membranes fusion. S2 region belongs to the class I viral fusion protein. Under the current model, the protein has at least 3 conformational states: pre-fusion native state, pre-hairpin intermediate state, and post-fusion hairpin state. During viral and target cell membrane fusion, the coiled coil regions (heptad repeats) regions assume a trimer-of-hairpins structure, positioning the fusion peptide in close proximity to the C-terminal region of the ectodomain. The formation of this structure appears to drive apposition and subsequent fusion of viral and target cell membranes. The polypeptide is Spike glycoprotein (Porcine transmissible gastroenteritis coronavirus (strain FS772/70) (TGEV)).